A 334-amino-acid polypeptide reads, in one-letter code: GTPase Obg (334 aa).

An Obg domain is found at 1–159 (MKFIDQAIIH…RDIQLELMLL (159 aa)). Residues 67–86 (AQNGQNGSSRKSSGKKGDDI) form a disordered region. The span at 68 to 77 (QNGQNGSSRK) shows a compositional bias: low complexity. Positions 160 to 333 (ADVGTLGMPN…LCSDITKYLK (174 aa)) constitute an OBG-type G domain. Residues 166 to 173 (GMPNVGKS), 191 to 195 (FTTLH), 213 to 216 (DIPG), 283 to 286 (NKID), and 314 to 316 (SSM) each bind GTP. The Mg(2+) site is built by S173 and T193.

This sequence belongs to the TRAFAC class OBG-HflX-like GTPase superfamily. OBG GTPase family. Monomer. Requires Mg(2+) as cofactor.

It is found in the cytoplasm. Its function is as follows. An essential GTPase which binds GTP, GDP and possibly (p)ppGpp with moderate affinity, with high nucleotide exchange rates and a fairly low GTP hydrolysis rate. Plays a role in control of the cell cycle, stress response, ribosome biogenesis and in those bacteria that undergo differentiation, in morphogenesis control. This Buchnera aphidicola subsp. Acyrthosiphon pisum (strain 5A) protein is GTPase Obg.